The primary structure comprises 238 residues: Ribonuclease Rh (238 aa).

The N-terminal stretch at M1–A16 is a signal peptide. 5 disulfide bridges follow: C19–C36, C26–C69, C35–C136, C79–C128, and C198–C229. Active-site residues include H62, E121, and H125.

It belongs to the RNase T2 family.

It carries out the reaction a ribonucleotidyl-ribonucleotide-RNA + H2O = a 3'-end 3'-phospho-ribonucleotide-RNA + a 5'-end dephospho-ribonucleoside-RNA + H(+). Its function is as follows. This is a base non-specific ribonuclease. This Rhizopus niveus protein is Ribonuclease Rh.